The sequence spans 452 residues: Ribosomal protein uS12 methylthiotransferase RimO (452 aa).

The region spanning 3 to 118 is the MTTase N-terminal domain; sequence GKIGFVSLGC…VMQVIHLHLP (116 aa). Positions 12, 48, 77, 149, 153, and 156 each coordinate [4Fe-4S] cluster. The Radical SAM core domain maps to 135–382; sequence LTPKHYAYLK…AKAEEISVGR (248 aa). One can recognise a TRAM domain in the interval 384–452; it reads AKKIGKRLQV…SQGHDLIAET (69 aa).

It belongs to the methylthiotransferase family. RimO subfamily. The cofactor is [4Fe-4S] cluster.

The protein resides in the cytoplasm. It catalyses the reaction L-aspartate(89)-[ribosomal protein uS12]-hydrogen + (sulfur carrier)-SH + AH2 + 2 S-adenosyl-L-methionine = 3-methylsulfanyl-L-aspartate(89)-[ribosomal protein uS12]-hydrogen + (sulfur carrier)-H + 5'-deoxyadenosine + L-methionine + A + S-adenosyl-L-homocysteine + 2 H(+). Functionally, catalyzes the methylthiolation of an aspartic acid residue of ribosomal protein uS12. The sequence is that of Ribosomal protein uS12 methylthiotransferase RimO from Polynucleobacter necessarius subsp. necessarius (strain STIR1).